Consider the following 392-residue polypeptide: Succinate--CoA ligase [ADP-forming] subunit beta (392 aa).

Residues 9 to 236 (KELFAAHGVP…PSAADPLEAK (228 aa)) enclose the ATP-grasp domain. Residues Lys45, 52–54 (GRG), Val94, and Glu99 contribute to the ATP site. The Mg(2+) site is built by Asn191 and Asp205. Substrate is bound by residues Asn256 and 318–320 (GIT).

It belongs to the succinate/malate CoA ligase beta subunit family. As to quaternary structure, heterotetramer of two alpha and two beta subunits. Mg(2+) is required as a cofactor.

It carries out the reaction succinate + ATP + CoA = succinyl-CoA + ADP + phosphate. The enzyme catalyses GTP + succinate + CoA = succinyl-CoA + GDP + phosphate. The protein operates within carbohydrate metabolism; tricarboxylic acid cycle; succinate from succinyl-CoA (ligase route): step 1/1. Its function is as follows. Succinyl-CoA synthetase functions in the citric acid cycle (TCA), coupling the hydrolysis of succinyl-CoA to the synthesis of either ATP or GTP and thus represents the only step of substrate-level phosphorylation in the TCA. The beta subunit provides nucleotide specificity of the enzyme and binds the substrate succinate, while the binding sites for coenzyme A and phosphate are found in the alpha subunit. This chain is Succinate--CoA ligase [ADP-forming] subunit beta, found in Acidothermus cellulolyticus (strain ATCC 43068 / DSM 8971 / 11B).